A 316-amino-acid polypeptide reads, in one-letter code: Serpentine receptor class gamma-4 (316 aa).

7 helical membrane-spanning segments follow: residues 21–41 (FVYL…IWGT), 50–70 (SFFT…FLDV), 99–121 (IVYP…LSIN), 140–160 (MKKV…NVII), 188–208 (FQII…SITL), 229–249 (TAWI…FAFF), and 258–278 (IFYI…PIVM).

The protein belongs to the nematode receptor-like protein srg family.

The protein localises to the membrane. The chain is Serpentine receptor class gamma-4 (srg-4) from Caenorhabditis elegans.